A 111-amino-acid chain; its full sequence is Small ribosomal subunit protein uS10 (111 aa).

It belongs to the universal ribosomal protein uS10 family. As to quaternary structure, part of the 30S ribosomal subunit.

Involved in the binding of tRNA to the ribosomes. This chain is Small ribosomal subunit protein uS10, found in Xanthomonas euvesicatoria pv. vesicatoria (strain 85-10) (Xanthomonas campestris pv. vesicatoria).